Here is a 333-residue protein sequence, read N- to C-terminus: DNA-directed RNA polymerase subunit alpha (333 aa).

The tract at residues 1–233 (MVREKVKVST…NLFIPFLHVE (233 aa)) is alpha N-terminal domain (alpha-NTD). An alpha C-terminal domain (alpha-CTD) region spans residues 267–333 (LVFQYIFIDQ…LEKNRKFISN (67 aa)).

The protein belongs to the RNA polymerase alpha chain family. In terms of assembly, in plastids the minimal PEP RNA polymerase catalytic core is composed of four subunits: alpha, beta, beta', and beta''. When a (nuclear-encoded) sigma factor is associated with the core the holoenzyme is formed, which can initiate transcription.

The protein resides in the plastid. It is found in the chloroplast. The enzyme catalyses RNA(n) + a ribonucleoside 5'-triphosphate = RNA(n+1) + diphosphate. In terms of biological role, DNA-dependent RNA polymerase catalyzes the transcription of DNA into RNA using the four ribonucleoside triphosphates as substrates. The protein is DNA-directed RNA polymerase subunit alpha of Aethionema grandiflorum (Persian stone-cress).